The sequence spans 402 residues: LIM/homeobox protein Lhx5 (402 aa).

LIM zinc-binding domains lie at 3–61 (VHCA…RRFG) and 62–125 (TKCA…SSSL). The span at 124-135 (SLKEGSLNSVSS) shows a compositional bias: low complexity. Disordered regions lie at residues 124 to 186 (SLKE…PRTT) and 298 to 402 (HGPP…AAVW). Basic and acidic residues predominate over residues 151–167 (DDPKETDNSTSSDKETA). The segment at residues 180–239 (RRGPRTTIKAKQLETLKAAFAATPKPTRHIREQLAQETGLNMRVIQVWFQNRRSKERRMK) is a DNA-binding region (homeobox). Low complexity-rich tracts occupy residues 300–311 (PPSQAQSPADSS) and 322–336 (PLGA…PHAA).

In terms of tissue distribution, expressed in fetal brain and in various regions of the adult central nervous system including the spinal cord, the thalamus, and the cerebellum.

It localises to the nucleus. Plays an essential role in the regulation of neuronal differentiation and migration during development of the central nervous system. The chain is LIM/homeobox protein Lhx5 (LHX5) from Homo sapiens (Human).